Here is a 349-residue protein sequence, read N- to C-terminus: N-acetyltaurine hydrolase (349 aa).

Positions 26, 28, 169, 201, 230, and 298 each coordinate a divalent metal cation.

The protein belongs to the metallo-dependent hydrolases superfamily. Phosphotriesterase family. It depends on a divalent metal cation as a cofactor.

The protein resides in the cytoplasm. Its subcellular location is the cytosol. It catalyses the reaction N-acetyltaurine + H2O = taurine + acetate. The catalysed reaction is N-propanoyltaurine + H2O = propanoate + taurine. The enzyme catalyses N-acetyl-L-methionine + H2O = L-methionine + acetate. It carries out the reaction N-acetyl-L-isoleucine + H2O = L-isoleucine + acetate. It catalyses the reaction N-acetyl-L-leucine + H2O = L-leucine + acetate. The catalysed reaction is N-acetyl-L-valine + H2O = L-valine + acetate. In terms of biological role, N-acetyltaurine hydrolase that catalyzes the hydrolysis of N-acetyltaurine into taurine and acetate. PTER also acts on other N-acetyl amino acids (Met, Ile, Leu, Val) and N-propionyltaurine, but at lower rates. The sequence is that of N-acetyltaurine hydrolase (pter) from Tetraodon nigroviridis (Spotted green pufferfish).